We begin with the raw amino-acid sequence, 124 residues long: Large ribosomal subunit protein bL19 (124 aa).

Belongs to the bacterial ribosomal protein bL19 family.

This protein is located at the 30S-50S ribosomal subunit interface and may play a role in the structure and function of the aminoacyl-tRNA binding site. This chain is Large ribosomal subunit protein bL19, found in Acidiphilium cryptum (strain JF-5).